The following is a 305-amino-acid chain: MEIKDGFIIINKEKGYTSHDCVQQIRKLLGTKKVGHTGTLDPGVTGTLPIAIGSATRFIQYLPQGKTYIGQIQLGIRTKTDDIQGEIINKKEWPILSNAQLDKFLNKFRGIIQQIPPKVSSVHVNGERAYKKFFKNEEFELKPREVKIEELVLKKWDQINGILEIKISCSTGTYIRSIARDLGGVLDSEGCLLNLKRISACGFHEKNSIKISDLVNLNKNCSTFIIPTIYALDHISTLILNNQEEINFWETGRLIKLDEENLIKSSKFDYKKPIKIINNQKMLLGIGFINEDKNKLHPKLVLNAK.

Asp-41 serves as the catalytic Nucleophile.

This sequence belongs to the pseudouridine synthase TruB family. Type 1 subfamily.

The catalysed reaction is uridine(55) in tRNA = pseudouridine(55) in tRNA. Functionally, responsible for synthesis of pseudouridine from uracil-55 in the psi GC loop of transfer RNAs. This is tRNA pseudouridine synthase B from Prochlorococcus marinus (strain MIT 9515).